We begin with the raw amino-acid sequence, 216 residues long: tRNA (guanine-N(7)-)-methyltransferase (216 aa).

S-adenosyl-L-methionine contacts are provided by glutamate 43, aspartate 68, asparagine 95, and asparagine 117. Substrate contacts are provided by residues aspartate 153 and 190–193 (TEYE).

It belongs to the class I-like SAM-binding methyltransferase superfamily. TrmB family.

It carries out the reaction guanosine(46) in tRNA + S-adenosyl-L-methionine = N(7)-methylguanosine(46) in tRNA + S-adenosyl-L-homocysteine. It functions in the pathway tRNA modification; N(7)-methylguanine-tRNA biosynthesis. Functionally, catalyzes the formation of N(7)-methylguanine at position 46 (m7G46) in tRNA. In Desulfitobacterium hafniense (strain Y51), this protein is tRNA (guanine-N(7)-)-methyltransferase.